Reading from the N-terminus, the 431-residue chain is Serine--tRNA ligase (431 aa).

235-237 (TAE) lines the L-serine pocket. ATP-binding positions include 266–268 (RRE) and Val-282. Glu-289 contacts L-serine. Position 353–356 (353–356 (EASS)) interacts with ATP. Ser-389 provides a ligand contact to L-serine.

It belongs to the class-II aminoacyl-tRNA synthetase family. Type-1 seryl-tRNA synthetase subfamily. As to quaternary structure, homodimer. The tRNA molecule binds across the dimer.

Its subcellular location is the cytoplasm. The catalysed reaction is tRNA(Ser) + L-serine + ATP = L-seryl-tRNA(Ser) + AMP + diphosphate + H(+). It carries out the reaction tRNA(Sec) + L-serine + ATP = L-seryl-tRNA(Sec) + AMP + diphosphate + H(+). It participates in aminoacyl-tRNA biosynthesis; selenocysteinyl-tRNA(Sec) biosynthesis; L-seryl-tRNA(Sec) from L-serine and tRNA(Sec): step 1/1. Its function is as follows. Catalyzes the attachment of serine to tRNA(Ser). Is also able to aminoacylate tRNA(Sec) with serine, to form the misacylated tRNA L-seryl-tRNA(Sec), which will be further converted into selenocysteinyl-tRNA(Sec). This chain is Serine--tRNA ligase, found in Chlorobium phaeobacteroides (strain DSM 266 / SMG 266 / 2430).